Reading from the N-terminus, the 843-residue chain is Translation initiation factor IF-2 (843 aa).

Disordered regions lie at residues 55–185 (AEAV…EDRD) and 209–228 (KVEE…QVKV). Over residues 62–106 (PQEKPKKSAPKKEEKPKEEVKKEAEEKVAASKKEEEKPQEKKSVE) the composition is skewed to basic and acidic residues. Residues 114–128 (LKKRRGLVIVKKKRP) are compositionally biased toward basic residues. The segment covering 129-141 (KVEPKVEEKEAKQ) has biased composition (basic and acidic residues). The segment covering 156–165 (LKRKPKKAKK) has biased composition (basic residues). 2 stretches are compositionally biased toward basic and acidic residues: residues 171-185 (KKNE…EDRD) and 209-221 (KVEE…EPQK). In terms of domain architecture, tr-type G spans 342–511 (ERPPVITIMG…LLQAEIMELK (170 aa)). Residues 351–358 (GHVDHGKT) form a G1 region. 351-358 (GHVDHGKT) is a GTP binding site. The tract at residues 376–380 (GITQH) is G2. The segment at 397 to 400 (DTPG) is G3. Residues 397-401 (DTPGH) and 451-454 (NKID) contribute to the GTP site. The G4 stretch occupies residues 451–454 (NKID). Positions 487–489 (SAK) are G5.

It belongs to the TRAFAC class translation factor GTPase superfamily. Classic translation factor GTPase family. IF-2 subfamily.

The protein localises to the cytoplasm. In terms of biological role, one of the essential components for the initiation of protein synthesis. Protects formylmethionyl-tRNA from spontaneous hydrolysis and promotes its binding to the 30S ribosomal subunits. Also involved in the hydrolysis of GTP during the formation of the 70S ribosomal complex. In Nitratiruptor sp. (strain SB155-2), this protein is Translation initiation factor IF-2.